We begin with the raw amino-acid sequence, 112 residues long: UPF0342 protein SPP_1392 (112 aa).

Belongs to the UPF0342 family.

The sequence is that of UPF0342 protein SPP_1392 from Streptococcus pneumoniae (strain P1031).